A 60-amino-acid chain; its full sequence is Potassium channel toxin alpha-KTx 29.2 (60 aa).

An N-terminal signal peptide occupies residues 1-28 (MKSVCGVLIILVVLTTMLSISTFSTVGA). 3 disulfide bridges follow: Cys32/Cys51, Cys40/Cys56, and Cys44/Cys58.

The protein belongs to the short scorpion toxin superfamily. Potassium channel inhibitor family. Alpha-KTx 29 subfamily. Expressed by the venom gland.

The protein localises to the secreted. Its function is as follows. Weakly inhibits the Kv1.3/KCNA3 channel (1 uM of thetoxin inhibits currents by 13.2%) and Kv7.1/KCNQ1 channel (10 uM of the toxin inhibits currents by 27.7%). This is Potassium channel toxin alpha-KTx 29.2 from Lychas mucronatus (Chinese swimming scorpion).